The primary structure comprises 200 residues: Methylthioribulose-1-phosphate dehydratase (200 aa).

2 residues coordinate Zn(2+): H90 and H92.

This sequence belongs to the aldolase class II family. MtnB subfamily. The cofactor is Zn(2+).

It catalyses the reaction 5-(methylsulfanyl)-D-ribulose 1-phosphate = 5-methylsulfanyl-2,3-dioxopentyl phosphate + H2O. It functions in the pathway amino-acid biosynthesis; L-methionine biosynthesis via salvage pathway; L-methionine from S-methyl-5-thio-alpha-D-ribose 1-phosphate: step 2/6. In terms of biological role, catalyzes the dehydration of methylthioribulose-1-phosphate (MTRu-1-P) into 2,3-diketo-5-methylthiopentyl-1-phosphate (DK-MTP-1-P). The chain is Methylthioribulose-1-phosphate dehydratase from Sodalis glossinidius (strain morsitans).